Here is a 171-residue protein sequence, read N- to C-terminus: Co-chaperone protein HscB (171 aa).

One can recognise a J domain in the interval 2–74; the sequence is DYFTLFGLPA…LARAEYLLSL (73 aa).

It belongs to the HscB family. In terms of assembly, interacts with HscA and stimulates its ATPase activity. Interacts with IscU.

Its function is as follows. Co-chaperone involved in the maturation of iron-sulfur cluster-containing proteins. Seems to help targeting proteins to be folded toward HscA. The protein is Co-chaperone protein HscB of Enterobacter sp. (strain 638).